We begin with the raw amino-acid sequence, 213 residues long: Uridine kinase (213 aa).

13–20 (GASASGKS) contacts ATP.

Belongs to the uridine kinase family.

The protein localises to the cytoplasm. It catalyses the reaction uridine + ATP = UMP + ADP + H(+). The catalysed reaction is cytidine + ATP = CMP + ADP + H(+). It participates in pyrimidine metabolism; CTP biosynthesis via salvage pathway; CTP from cytidine: step 1/3. The protein operates within pyrimidine metabolism; UMP biosynthesis via salvage pathway; UMP from uridine: step 1/1. The polypeptide is Uridine kinase (Haemophilus influenzae (strain PittEE)).